A 687-amino-acid polypeptide reads, in one-letter code: Polyphosphate kinase (687 aa).

Asn45 lines the ATP pocket. Mg(2+) contacts are provided by Arg375 and Arg405. The active-site Phosphohistidine intermediate is His435. The ATP site is built by Tyr472, Arg568, and His596.

The protein belongs to the polyphosphate kinase 1 (PPK1) family. Mg(2+) is required as a cofactor. In terms of processing, an intermediate of this reaction is the autophosphorylated ppk in which a phosphate is covalently linked to a histidine residue through a N-P bond.

The catalysed reaction is [phosphate](n) + ATP = [phosphate](n+1) + ADP. Its function is as follows. Catalyzes the reversible transfer of the terminal phosphate of ATP to form a long-chain polyphosphate (polyP). This chain is Polyphosphate kinase, found in Burkholderia ambifaria (strain ATCC BAA-244 / DSM 16087 / CCUG 44356 / LMG 19182 / AMMD) (Burkholderia cepacia (strain AMMD)).